The sequence spans 465 residues: WASH complex subunit 1 (465 aa).

The required for WASH complex assembly stretch occupies residues 1-54 (MTPVRMQHSLAGQTYAVPFIQPDLRREEAVQQMADALQYLQKVSGDIFSRISQQ). A WHD1 region spans residues 1–167 (MTPVRMQHSL…EGLGGLPSNI (167 aa)). Residue Lys-220 forms a Glycyl lysine isopeptide (Lys-Gly) (interchain with G-Cter in ubiquitin) linkage. Disordered stretches follow at residues 297–359 (QDGV…VDPS), 376–407 (GKAK…QGGH), and 423–465 (ISGK…DWES). A compositionally biased stretch (pro residues) spans 302 to 314 (TPPPPPPPPPPAP). A VCA region spans residues 349 to 465 (QGAPREVVDP…AEEDEDDWES (117 aa)). Residues 361–383 (GWATLLESIRQAGGIGKAKLRSM) form the WH2 domain. The span at 382 to 398 (SMKERKLEKQQQKEQEQ) shows a compositional bias: basic and acidic residues. Residues 424 to 436 (SGKGPGAGEGPGG) are compositionally biased toward gly residues. Over residues 456 to 465 (AEEDEDDWES) the composition is skewed to acidic residues.

It belongs to the WASH1 family. As to quaternary structure, component of the WASH core complex also described as WASH regulatory complex (SHRC) composed of WASH (WASHC1, WASH2P or WASH3P), WASHC2 (WASHC2A or WASHC2C), WASHC3, WASHC4 and WASHC5. The WASH core complex associates via WASHC2 with the F-actin-capping protein dimer (formed by CAPZA1, CAPZA2 or CAPZA3 and CAPZB) in a transient or substoichiometric manner which was initially described as WASH complex. Interacts (via WHD1 region) with WASHC2C; the interaction is direct. Interacts with VPS35; mediates the association with the retromer CSC complex. Interacts with FKBP15. Interacts with alpha-tubulin. Interacts with BECN1; this interaction can be competed out by AMBRA1 binding. Interacts with BLOC1S2; may associate with the BLOC-1 complex. Interacts with tubulin gamma chain (TUBG1 or TUBG2). Interacts with EXOC1, EXOC4, EXOC8; in MMP14-positive endosomes in breast tumor cells; indicative for an association with the exocyst complex. Interacts with TBC1D23. In terms of processing, ubiquitinated at Lys-220 via 'Lys-63'-linked ubiquitin chains by the TRIM27:MAGEL2 E3 ubiquitin ligase complex, leading to promote endosomal F-actin assembly.

It localises to the early endosome membrane. The protein localises to the recycling endosome membrane. Its subcellular location is the late endosome. It is found in the cytoplasmic vesicle. The protein resides in the autophagosome. It localises to the cytoplasm. The protein localises to the cytoskeleton. Its subcellular location is the microtubule organizing center. It is found in the centrosome. The protein resides in the centriole. In terms of biological role, acts as a component of the WASH core complex that functions as a nucleation-promoting factor (NPF) at the surface of endosomes, where it recruits and activates the Arp2/3 complex to induce actin polymerization, playing a key role in the fission of tubules that serve as transport intermediates during endosome sorting. Involved in endocytic trafficking of EGF. Involved in transferrin receptor recycling. Regulates the trafficking of endosomal alpha5beta1 integrin to the plasma membrane and involved in invasive cell migration. In T-cells involved in endosome-to-membrane recycling of receptors including T-cell receptor (TCR), CD28 and ITGAL; proposed to be implicated in T cell proliferation and effector function. In dendritic cells involved in endosome-to-membrane recycling of major histocompatibility complex (MHC) class II probably involving retromer and subsequently allowing antigen sampling, loading and presentation during T-cell activation. Involved in Arp2/3 complex-dependent actin assembly driving Salmonella typhimurium invasion independent of ruffling. Involved in the exocytosis of MMP14 leading to matrix remodeling during invasive migration and implicating late endosome-to-plasma membrane tubular connections and cooperation with the exocyst complex. Involved in negative regulation of autophagy independently from its role in endosomal sorting by inhibiting BECN1 ubiquitination to inactivate PIK3C3/Vps34 activity. In Homo sapiens (Human), this protein is WASH complex subunit 1.